A 280-amino-acid polypeptide reads, in one-letter code: DegV domain-containing protein SPy_1698/M5005_Spy1391 (280 aa).

The region spanning 3 to 280 (WKIVTDSGCD…DGGLLMGYEI (278 aa)) is the DegV domain. Residues S63 and S91 each contribute to the hexadecanoate site.

Functionally, may bind long-chain fatty acids, such as palmitate, and may play a role in lipid transport or fatty acid metabolism. The protein is DegV domain-containing protein SPy_1698/M5005_Spy1391 of Streptococcus pyogenes serotype M1.